The sequence spans 346 residues: FMRFamide-related peptides type HF-1 (346 aa).

An N-terminal signal peptide occupies residues 1–19; that stretch reads MTSLCLTIAPAVLSLICLS. A propeptide spanning residues 20–45 is cleaved from the precursor; sequence SYGWAEDNNGIHTLDDGDNDPFFRHN. At Phe51 the chain carries Phenylalanine amide. A propeptide spanning residues 54 to 94 is cleaved from the precursor; that stretch reads AFVPLWDNADDSLVRKNLLTHWSEFPLSPALSSSDVFSRNS. The residue at position 100 (Phe100) is a Phenylalanine amide. Positions 103 to 109 are excised as a propeptide; it reads SYPPYQD. Residue Phe115 is modified to Phenylalanine amide. Residues 118-203 constitute a propeptide that is removed on maturation; sequence SHQPDIDEYL…EILSNEDDLE (86 aa). Residues 137–185 are disordered; sequence YRKRRSEDGDSKEDGLNRVARSADANQQSKNTQSNKFGKDLQKRETKKE. Basic and acidic residues predominate over residues 141-152; sequence RSEDGDSKEDGL. Residues 160–172 show a composition bias toward polar residues; the sequence is DANQQSKNTQSNK. Residues 173–185 are compositionally biased toward basic and acidic residues; that stretch reads FGKDLQKRETKKE. Phe209 and Phe216 each carry phenylalanine amide. A propeptide spanning residues 219-226 is cleaved from the precursor; the sequence is GDEDESYD. Position 232 is a phenylalanine amide (Phe232). Positions 235-243 are excised as a propeptide; sequence SLRHDQEFE. 2 positions are modified to phenylalanine amide: Phe249 and Phe256. Positions 259 to 267 are excised as a propeptide; sequence GDEDDAREE. A Phenylalanine amide modification is found at Phe273. Positions 276 to 283 are excised as a propeptide; that stretch reads SSNEDEDI. Phe290 carries the phenylalanine amide modification. The propeptide occupies 293-301; it reads SGNEDGDVD. 2 positions are modified to phenylalanine amide: Phe307 and Phe314. The propeptide occupies 317-325; sequence SEKEDGDVD. A phenylalanine amide mark is found at Phe331 and Phe338. Positions 341–346 are excised as a propeptide; it reads GDSETS.

This sequence belongs to the FARP (FMRFamide related peptide) family. Central nervous system.

It localises to the secreted. In terms of biological role, can function as both cardioregulatory hormones and transmitters and may regulate cardiovascular function. In Cornu aspersum (Brown garden snail), this protein is FMRFamide-related peptides type HF-1.